A 495-amino-acid chain; its full sequence is Cytoplasmic alpha-amylase (495 aa).

Positions 104 and 198 each coordinate Ca(2+). Aspartate 235 serves as the catalytic Nucleophile. Residue histidine 239 coordinates Ca(2+). Catalysis depends on glutamate 265, which acts as the Proton donor.

This sequence belongs to the glycosyl hydrolase 13 family. As to quaternary structure, monomer. It depends on Ca(2+) as a cofactor.

It is found in the cytoplasm. The enzyme catalyses Endohydrolysis of (1-&gt;4)-alpha-D-glucosidic linkages in polysaccharides containing three or more (1-&gt;4)-alpha-linked D-glucose units.. In Escherichia coli (strain K12), this protein is Cytoplasmic alpha-amylase (amyA).